We begin with the raw amino-acid sequence, 261 residues long: Triosephosphate isomerase (261 aa).

A substrate-binding site is contributed by 10–12 (NWK). H100 functions as the Electrophile in the catalytic mechanism. The active-site Proton acceptor is the E172. Residues G178, S218, and 239–240 (GG) contribute to the substrate site.

This sequence belongs to the triosephosphate isomerase family. As to quaternary structure, homodimer.

It is found in the cytoplasm. It catalyses the reaction D-glyceraldehyde 3-phosphate = dihydroxyacetone phosphate. It functions in the pathway carbohydrate biosynthesis; gluconeogenesis. The protein operates within carbohydrate degradation; glycolysis; D-glyceraldehyde 3-phosphate from glycerone phosphate: step 1/1. Functionally, involved in the gluconeogenesis. Catalyzes stereospecifically the conversion of dihydroxyacetone phosphate (DHAP) to D-glyceraldehyde-3-phosphate (G3P). In Mycobacteroides abscessus (strain ATCC 19977 / DSM 44196 / CCUG 20993 / CIP 104536 / JCM 13569 / NCTC 13031 / TMC 1543 / L948) (Mycobacterium abscessus), this protein is Triosephosphate isomerase.